The sequence spans 606 residues: MAAVTSEFPSKPISYTSTNTSAKTYYLKSVKKRVTTCFQQLRDKLQSSGSFRKSSSSCLNQIFVRSDFSACGERFRKIFKSARKTELPELWKVPLVAHELTSRQSSQQLQVVARLFSSTQISTKEITYNSNSNTSENNMTIIESNYISVREEYPDIDSEVRAILLSHAQNGITISSIKSEYRKLTGNPFPLHDNVTDFLLTIPNVTAECSESGKRIFNLKASLKNGHLLDMVLNQKERTSDYSSGAPSLENIPRAPPRYWKNPFKRRALSQLNTSPRTVPKITDEKTKDIATRPVSLHQMANEAAESNWCYQDNWKHLNNFYQQASVNAPKMPVPINIYSPDAPEEPINLAPPGHQPSCRTQSQKTEPTENRHLGIFVHPFNGMNIMKRRHEMTPTPTILTSGTYNDSLLTINSDYDAYLLDFPLMGDDFMLYLARMELKCRFRRHERVLQSGLCVSGLTINGARNRLKRVQLPEGTQIIVNIGSVDIMRGKPLVQIEHDFRLLIKEMHNMRLVPILTNLAPLGNYCHDKVLCDKIYRFNKFIRSECCHLKVIDIHSCLINERGVVRFDCFQASPRQVTGSKEPYLFWNKIGRQRVLQVIETSLEY.

In terms of domain architecture, HTH OST-type spans Glu-152–Ala-221. Residues Ser-270 and Ser-275 each carry the phosphoserine modification. The tract at residues Leu-425 to Leu-439 is leucine-zipper.

As to quaternary structure, interacts with smaug (smg). In terms of assembly, interacts with yl/yolkless. In terms of tissue distribution, begins to accumulate at the posterior pole of the oocyte from stage 8 onwards.

The protein resides in the endosome. In terms of biological role, organizes the germ plasm and directs localization of the posterior determinant nanos. Oskar protein is required to keep nanos (nos) RNA and staufen protein at the posterior pole. This is Maternal effect protein oskar (osk) from Drosophila melanogaster (Fruit fly).